We begin with the raw amino-acid sequence, 359 residues long: MENKETTTTTTTTNNGSDKKKRSLKIDLHTHILPKNWPNLKEKYGYGGWVSLDHHCSCKAKMMIDGKFFREIDSNCWDPDVRIQELNRDDVDIQVLSTVPVMFGYWAKPQDALDLAQYLNDHIAQVVSENPKRFIGLGSLPMQCTESSIQELRRCILELGLPGIQIGSNVNGKNLDDPSLFPIFEECEKLGAAVFIHPWEMVGKDRMPQYWLPWLVGMPAETCLAICSMIFGGVFQRLPNLKVCFAHGGGSFPFTIGRIEHGFNARPDLCAVVNPINPREYIGKFWVDSLVHDEEALKFLVNLMGEKKVTLGTDYPFPLGELVPGQLIESIKEFSETTKENLLGGNALEFLGLDPNKYL.

Positions 1 to 13 (MENKETTTTTTTT) are enriched in low complexity. The tract at residues 1-21 (MENKETTTTTTTTNNGSDKKK) is disordered. The Zn(2+) site is built by H29 and H31. Residue R70 participates in substrate binding. Residues H197 and D314 each coordinate Zn(2+).

It belongs to the metallo-dependent hydrolases superfamily. ACMSD family. As to quaternary structure, monomer.

It carries out the reaction 2-amino-3-carboxymuconate 6-semialdehyde + H(+) = 2-aminomuconate 6-semialdehyde + CO2. It participates in secondary metabolite metabolism; quinolate metabolism. Its function is as follows. Converts alpha-amino-beta-carboxymuconate-epsilon-semialdehyde (ACMS) to alpha-aminomuconate semialdehyde (AMS). This is 2-amino-3-carboxymuconate-6-semialdehyde decarboxylase (acmsd) from Dictyostelium discoideum (Social amoeba).